Reading from the N-terminus, the 420-residue chain is Probable aminotransferase aclI (420 aa).

Position 264 is an N6-(pyridoxal phosphate)lysine (lysine 264).

This sequence belongs to the class-I pyridoxal-phosphate-dependent aminotransferase family. It depends on pyridoxal 5'-phosphate as a cofactor.

It participates in mycotoxin biosynthesis. Functionally, probable aminotransferase; part of the gene cluster that mediates the biosynthesis of aspirochlorine (or antibiotic A30641), an unusual halogenated spiro compound with distinctive antifungal properties due to selective inhibition of protein biosynthesis, and which is also active against bacteria, viruses, and murine tumor cells. The non-ribosomal peptide synthetase (NRPS) aclP is responsible the formation of the diketopiperazine (DKP) core from the condensation of 2 phenylalanine residues. One Phe residue is tailored into chlorotyrosine by hydroxylation and chlorination, whereas the second Phe undergoes an unprecedented C-C bond cleavage to be converted into glycine. After formation of the DKP, sulfur is incorporated into the DKP by conjugation with glutathione by aclG, followed by its stepwise degradation to the thiol by aclI, aclJ and aclK, and the dithiol oxidation by aclT. In addition, oxygenases (aclB, aclC, aclL and aclO) and O-methyltransferases (aclM and aclU) act as tailoring enzymes to produce the intermediate dechloroaspirochlorine. Ultimately, chlorination of dechloroaspirochlorine by the halogenase aclH is the last step in the aspirochlorine pathway. The chain is Probable aminotransferase aclI from Aspergillus oryzae (strain ATCC 42149 / RIB 40) (Yellow koji mold).